A 392-amino-acid polypeptide reads, in one-letter code: Methylthioribose-1-phosphate isomerase (392 aa).

Asp253 (proton donor) is an active-site residue.

Belongs to the eIF-2B alpha/beta/delta subunits family. MtnA subfamily.

It is found in the cytoplasm. The protein resides in the nucleus. The enzyme catalyses 5-(methylsulfanyl)-alpha-D-ribose 1-phosphate = 5-(methylsulfanyl)-D-ribulose 1-phosphate. Its pathway is amino-acid biosynthesis; L-methionine biosynthesis via salvage pathway; L-methionine from S-methyl-5-thio-alpha-D-ribose 1-phosphate: step 1/6. Catalyzes the interconversion of methylthioribose-1-phosphate (MTR-1-P) into methylthioribulose-1-phosphate (MTRu-1-P). This Pyrenophora tritici-repentis (strain Pt-1C-BFP) (Wheat tan spot fungus) protein is Methylthioribose-1-phosphate isomerase (mri1).